A 415-amino-acid polypeptide reads, in one-letter code: Serine hydroxymethyltransferase (415 aa).

Residues Leu121 and Gly125–Leu127 each bind (6S)-5,6,7,8-tetrahydrofolate. Lys230 is subject to N6-(pyridoxal phosphate)lysine. (6S)-5,6,7,8-tetrahydrofolate-binding positions include Glu246 and Ser354 to Phe356.

This sequence belongs to the SHMT family. In terms of assembly, homodimer. The cofactor is pyridoxal 5'-phosphate.

It is found in the cytoplasm. It catalyses the reaction (6R)-5,10-methylene-5,6,7,8-tetrahydrofolate + glycine + H2O = (6S)-5,6,7,8-tetrahydrofolate + L-serine. It participates in one-carbon metabolism; tetrahydrofolate interconversion. Its pathway is amino-acid biosynthesis; glycine biosynthesis; glycine from L-serine: step 1/1. Its function is as follows. Catalyzes the reversible interconversion of serine and glycine with tetrahydrofolate (THF) serving as the one-carbon carrier. This reaction serves as the major source of one-carbon groups required for the biosynthesis of purines, thymidylate, methionine, and other important biomolecules. Also exhibits THF-independent aldolase activity toward beta-hydroxyamino acids, producing glycine and aldehydes, via a retro-aldol mechanism. The polypeptide is Serine hydroxymethyltransferase (Bdellovibrio bacteriovorus (strain ATCC 15356 / DSM 50701 / NCIMB 9529 / HD100)).